The sequence spans 652 residues: 2',3'-cyclic-nucleotide 2'-phosphodiesterase/3'-nucleotidase (652 aa).

A signal peptide spans 1-24; the sequence is MFKRPLTLSLLASLIALTTSTAQA. A divalent metal cation-binding residues include Asp-36, His-38, Asp-81, Asn-121, His-230, His-262, and His-264. Residues Tyr-445 and 549 to 555 each bind substrate; that span reads YRAYSGK.

Belongs to the 5'-nucleotidase family. The cofactor is a divalent metal cation.

Its subcellular location is the periplasm. It catalyses the reaction a nucleoside 2',3'-cyclic phosphate + H2O = a nucleoside 3'-phosphate + H(+). It carries out the reaction a ribonucleoside 3'-phosphate + H2O = a ribonucleoside + phosphate. Its function is as follows. This bifunctional enzyme catalyzes two consecutive reactions during ribonucleic acid degradation. Converts a 2',3'-cyclic nucleotide to a 3'-nucleotide and then the 3'-nucleotide to the corresponding nucleoside and phosphate. The chain is 2',3'-cyclic-nucleotide 2'-phosphodiesterase/3'-nucleotidase (cpdB) from Yersinia enterocolitica.